We begin with the raw amino-acid sequence, 67 residues long: Bowman-Birk type proteinase inhibitor A4 (67 aa).

4 disulfides stabilise this stretch: Cys10–Cys29, Cys16–Cys27, Cys36–Cys43, and Cys40–Cys57.

Belongs to the Bowman-Birk serine protease inhibitor family. In terms of tissue distribution, expressed in bulb (at protein level).

Its function is as follows. Serine protease inhibitor. Inhibits trypsin (Ki=12nM) and weakly inhibits chymotrypsin with (Ki=460nm). Does not inhibit bacterial subtilisin. The sequence is that of Bowman-Birk type proteinase inhibitor A4 from Hyacinthus orientalis (Common hyacinth).